The following is a 369-amino-acid chain: Phosphate acyltransferase (369 aa).

A disordered region spans residues 342 to 369 (ASRAPNSQTAGGERAAAVPQSAQLRMDS).

It belongs to the PlsX family. As to quaternary structure, homodimer. Probably interacts with PlsY.

The protein localises to the cytoplasm. It catalyses the reaction a fatty acyl-[ACP] + phosphate = an acyl phosphate + holo-[ACP]. It functions in the pathway lipid metabolism; phospholipid metabolism. In terms of biological role, catalyzes the reversible formation of acyl-phosphate (acyl-PO(4)) from acyl-[acyl-carrier-protein] (acyl-ACP). This enzyme utilizes acyl-ACP as fatty acyl donor, but not acyl-CoA. The polypeptide is Phosphate acyltransferase (Methylocella silvestris (strain DSM 15510 / CIP 108128 / LMG 27833 / NCIMB 13906 / BL2)).